The chain runs to 174 residues: Guided entry of tail-anchored proteins factor 1 (174 aa).

At Met-1–Arg-8 the chain is on the lumenal side. Residues Trp-9–Pro-29 form a helical membrane-spanning segment. Over Thr-30–Lys-99 the chain is Cytoplasmic. Positions Leu-39–Thr-94 form a coiled coil. An interaction with GET3/TRC40 region spans residues Leu-39–Leu-97. Residues Ile-100–Ile-120 traverse the membrane as a helical segment. The Lumenal segment spans residues Trp-121–Arg-148. Residues Val-149–Ile-169 form a helical membrane-spanning segment. Over Leu-170–Ser-174 the chain is Cytoplasmic.

It belongs to the WRB/GET1 family. As to quaternary structure, component of the Golgi to ER traffic (GET) complex, which is composed of GET1, CAMLG/GET2 and GET3. Within the complex, GET1 and CAMLG form a heterotetramer which is stabilized by phosphatidylinositol binding and which binds to the GET3 homodimer. Interacts with CAMLG/GET2 (via C-terminus). GET3 shows a higher affinity for CAMLG than for GET1.

Its subcellular location is the endoplasmic reticulum membrane. Its function is as follows. Required for the post-translational delivery of tail-anchored (TA) proteins to the endoplasmic reticulum. Together with CAMLG/GET2, acts as a membrane receptor for soluble GET3/TRC40, which recognizes and selectively binds the transmembrane domain of TA proteins in the cytosol. Required to ensure correct topology and ER insertion of CAMLG. The chain is Guided entry of tail-anchored proteins factor 1 from Rattus norvegicus (Rat).